We begin with the raw amino-acid sequence, 252 residues long: MKALIVDDEPLARNELQYLLNLNDAIDEIEEAENIEETLEKLLYNTFDLIFLDINLMDESGIDLAQKINKMKRSPHIIFATAHEKFAVKAFELNATDYILKPFEKERINQAVNKVDMAKDKSKNKDKTITPKYIDYSDDERAQTHVLPIEVDERIHILNFTDIIALSVNNGITTIDTTKQSYETTETLNHYEKKLPSSLFIKIHRATIVNKEHIQTIEHWFNYTYQLTLTHEFKYQVSRSYMKTFKQQLGLQ.

One can recognise a Response regulatory domain in the interval 2–116 (KALIVDDEPL…RINQAVNKVD (115 aa)). Position 53 is a 4-aspartylphosphate (aspartate 53). The HTH LytTR-type domain maps to 147-251 (LPIEVDERIH…MKTFKQQLGL (105 aa)).

Phosphorylated by LytS.

The protein resides in the cytoplasm. Functionally, member of the two-component regulatory system LytR/LytS that probably regulates genes involved in cell wall metabolism. The chain is Sensory transduction protein LytR (lytR) from Staphylococcus epidermidis (strain ATCC 12228 / FDA PCI 1200).